Here is a 326-residue protein sequence, read N- to C-terminus: 5-dehydro-2-deoxygluconokinase (326 aa).

Belongs to the carbohydrate kinase PfkB family.

It catalyses the reaction 5-dehydro-2-deoxy-D-gluconate + ATP = 6-phospho-5-dehydro-2-deoxy-D-gluconate + ADP + H(+). It functions in the pathway polyol metabolism; myo-inositol degradation into acetyl-CoA; acetyl-CoA from myo-inositol: step 5/7. In terms of biological role, catalyzes the phosphorylation of 5-dehydro-2-deoxy-D-gluconate (2-deoxy-5-keto-D-gluconate or DKG) to 6-phospho-5-dehydro-2-deoxy-D-gluconate (DKGP). This chain is 5-dehydro-2-deoxygluconokinase, found in Lacticaseibacillus casei (Lactobacillus casei).